Reading from the N-terminus, the 316-residue chain is GPI-specific phospholipase A2-like PGAP3 (316 aa).

The first 19 residues, 1 to 19, serve as a signal peptide directing secretion; it reads MFLAAAAFLLSAPASASQG. The Lumenal portion of the chain corresponds to 20 to 97; that stretch reads DKEPVYRDCV…GKWPFARFLC (78 aa). N-linked (GlcNAc...) asparagine glycosylation is present at asparagine 36. The chain crosses the membrane as a helical span at residues 98 to 118; the sequence is FEEPASALASLLNGLACLLML. The Cytoplasmic portion of the chain corresponds to 119 to 131; that stretch reads LRYRSAVPCQSPM. A helical membrane pass occupies residues 132–152; that stretch reads YHTITAFSLVSLNAWFWSTVF. The Lumenal segment spans residues 153–165; the sequence is HTRDTYLTEKMDY. A helical membrane pass occupies residues 166–186; sequence FCASAVILYSIYLCCVRTLGL. Topologically, residues 187-194 are cytoplasmic; it reads RRPAISSM. A helical membrane pass occupies residues 195-215; the sequence is VGVLLILAFTSHVSYLTFVSF. At 216 to 220 the chain is on the lumenal side; sequence DYGYN. A helical transmembrane segment spans residues 221–241; that stretch reads MAANASIGIINLLWWLCWCWL. Residues 242 to 254 are Cytoplasmic-facing; it reads NRRILPYWWRCGM. Residues 255–275 traverse the membrane as a helical segment; the sequence is VVLLLHGLALLELLDFPPLFW. Over 276-278 the chain is Lumenal; sequence VLD. A helical transmembrane segment spans residues 279–299; that stretch reads AHAVWHLSTVPVHFLFYSFLI. Topologically, residues 300–316 are cytoplasmic; that stretch reads DDSLHLLNTEKPGVKLD.

Belongs to the PGAP3 family.

It is found in the golgi apparatus membrane. Functionally, involved in the fatty acid remodeling steps of GPI-anchor maturation where the unsaturated acyl chain at sn-2 of inositol phosphate is replaced by a saturated stearoyl chain. May catalyze the first step of the fatty acid remodeling, by removing the unsaturated acyl chain at sn-2 of inositol phosphate, generating a lyso-GPI intermediate. The fatty acid remodeling steps is critical for the integration of GPI-APs into lipid rafts. The sequence is that of GPI-specific phospholipase A2-like PGAP3 from Danio rerio (Zebrafish).